The following is a 237-amino-acid chain: Orotidine 5'-phosphate decarboxylase (237 aa).

Substrate contacts are provided by residues Asp-10, Lys-33, 60 to 69 (DLKLHDIPNT), Thr-123, Arg-185, Gln-194, Gly-214, and Arg-215. Residue Lys-62 is the Proton donor of the active site.

Belongs to the OMP decarboxylase family. Type 1 subfamily. In terms of assembly, homodimer.

It carries out the reaction orotidine 5'-phosphate + H(+) = UMP + CO2. The protein operates within pyrimidine metabolism; UMP biosynthesis via de novo pathway; UMP from orotate: step 2/2. Catalyzes the decarboxylation of orotidine 5'-monophosphate (OMP) to uridine 5'-monophosphate (UMP). This chain is Orotidine 5'-phosphate decarboxylase, found in Enterococcus faecalis (strain ATCC 700802 / V583).